We begin with the raw amino-acid sequence, 536 residues long: Probable galacturonosyltransferase 10 (536 aa).

The Cytoplasmic portion of the chain corresponds to 1–16 (MRRRGGDSFRRAGRRK). Residues 17-37 (ISNVVWWVLSGIALLLFFLIL) form a helical; Signal-anchor for type II membrane protein membrane-spanning segment. Residues 38–536 (SKAGHIEPRP…SPFMQQCNFH (499 aa)) are Lumenal-facing. N-linked (GlcNAc...) asparagine glycosylation is found at N64, N246, N300, N403, and N436.

It belongs to the glycosyltransferase 8 family. Expressed in roots, inflorescences, siliques, leaves and stems.

Its subcellular location is the golgi apparatus membrane. It participates in glycan metabolism; pectin biosynthesis. Its function is as follows. May be involved in pectin and/or xylans biosynthesis in cell walls. The sequence is that of Probable galacturonosyltransferase 10 (GAUT10) from Arabidopsis thaliana (Mouse-ear cress).